Here is a 387-residue protein sequence, read N- to C-terminus: MGKKQVAPPRALPPMPSLKDEIPLSRSKKKKSKSNNVPDDLLQNAGFNTSENKDPLSPERRKKKKKRLSIDAETSLTQHNPALPVVQNGKDTDNQAAEEGTTRKPRRRTKKTRSVGQEFPNELGVEDEDIIPDGHTKIPEQNPAFLASSLTSQPVGKFFVEKNRRFQAADRSEIIKTTEQTDVFLDVKPTWTSMDVSLTAHHIFRMVGLFCCGFLAGYAVWNIVVVYVLAGSQLTNLPNLLQTYKILAYPSQCFLYFLLVLSTITAFDRIDLERTADALRGLLKLDPAALASFFYFVALILALSQQMTSDRINFYTPPTENGSLWQANTEEQILQPWIVINLVVALLVGLAWLFLSCRPDIDHTEEAMFIPEGEDYPDMEKGTKIQG.

The disordered stretch occupies residues 1-116 (MGKKQVAPPR…RRTKKTRSVG (116 aa)). Positions 103–113 (RKPRRRTKKTR) are enriched in basic residues. 4 helical membrane passes run 209-229 (LFCCGFLAGYAVWNIVVVYVL), 246-266 (ILAYPSQCFLYFLLVLSTITA), 282-302 (LLKLDPAALASFFYFVALILA), and 337-357 (WIVINLVVALLVGLAWLFLSC).

It belongs to the TMEM237 family.

It is found in the membrane. Its subcellular location is the cell projection. It localises to the cilium. Functionally, component of the transition zone in primary cilia. Required for ciliogenesis. The protein is Transmembrane protein 237 (tmem237) of Xenopus tropicalis (Western clawed frog).